A 296-amino-acid polypeptide reads, in one-letter code: Myeloid differentiation primary response protein MyD88 (296 aa).

The region spanning 54-109 (MGFEYLEIRELETRPDPTRSLLDAWQGRSGASVGRLLELLALLDREDILKELKSRI) is the Death domain. The tract at residues 110-155 (EEDCQKYLGKQQNQESEKPLQVARVESSVPQTKELGGITTLDDPLG) is intermediate domain. The region spanning 159–293 (ELFDAFICYC…WFWTRLAKAL (135 aa)) is the TIR domain. Ser-244 is modified (phosphoserine).

In terms of assembly, homodimer. Also forms heterodimers with TIRAP. Binds to TLR2, TLR4, IRAK1, IRAK2 and IRAK4 via their respective TIR domains. Interacts with IL18R1. Interacts with BMX, IL1RL1, IKBKE and IRF7. Interacts with LRRFIP1 and LRRFIP2; this interaction positively regulates Toll-like receptor (TLR) signaling in response to agonist. Interacts with FLII. LRRFIP1 and LRRFIP2 compete with FLII for MYD88-binding. Interacts with IRF1. Upon IL1B treatment, forms a complex with PELI1, IRAK1, IRAK4 and TRAF6; this complex recruits MAP3K7/TAK1, TAB1 and TAB2 to mediate NF-kappa-B activation. Direct binding of SMAD6 to PELI1 prevents the complex formation and hence negatively regulates IL1R-TLR signaling and eventually NF-kappa-B-mediated gene expression. May interact with PIK3AP1. Interacts (via TIR domain) with DHX9 (via H2A and OB-fold regions); this interaction is direct. Interacts with OTUD4 deubiquitinase; the interaction is direct. In terms of processing, ubiquitinated; undergoes 'Lys-63'-linked polyubiquitination. OTUD4 specifically hydrolyzes 'Lys-63'-linked polyubiquitinated MYD88. Deubiquitinated by USP3 that cleaves 'Lys-63'-linked ubiquitin chains leading to inhibition of MYD88-induced NF-kappa-B signaling. In terms of tissue distribution, detected in bone marrow. Isoform 1 is expressed in testis, kidney, lung, ovary, adrenal gland, provstate, thymus and heart, and weakly in skeletal muscle, liver, spleen and brain. Isoform 2 is mainly expressed in the spleen and weakly in brain.

Its subcellular location is the cytoplasm. The protein localises to the nucleus. Adapter protein involved in the Toll-like receptor and IL-1 receptor signaling pathway in the innate immune response. Acts via IRAK1, IRAK2, IRF7 and TRAF6, leading to NF-kappa-B activation, cytokine secretion and the inflammatory response. Increases IL-8 transcription. Involved in IL-18-mediated signaling pathway. Activates IRF1 resulting in its rapid migration into the nucleus to mediate an efficient induction of IFN-beta, NOS2/INOS, and IL12A genes. Upon TLR8 activation by GU-rich single-stranded RNA (GU-rich RNA) derived from viruses, induces IL1B release through NLRP3 inflammasome activation. MyD88-mediated signaling in intestinal epithelial cells is crucial for maintenance of gut homeostasis and controls the expression of the antimicrobial lectin REG3G in the small intestine. Mediates leukocyte recruitment at the inflammatory site. Functionally, defective in its ability to induce IRAK phosphorylation and NF-kappa-B activation and can function as a negative regulator of activation by IL-1 or lipopolysaccharide (LPS). The protein is Myeloid differentiation primary response protein MyD88 of Mus musculus (Mouse).